The sequence spans 604 residues: 2-isopropylmalate synthase 2, mitochondrial (604 aa).

Residues 1–50 (MVKHSFIALAEHASKLRRSIPPVKLTYKNMLRDPSVKYRAFAPPKMVKRI) constitute a mitochondrion transit peptide. Residues 60 to 335 (PRWLSTDLRD…SPNLDFSDLT (276 aa)) form the Pyruvate carboxyltransferase domain. Positions 69, 274, 276, and 310 each coordinate a divalent metal cation.

Belongs to the alpha-IPM synthase/homocitrate synthase family. LeuA type 2 subfamily. As to quaternary structure, homodimer. The cofactor is a divalent metal cation.

It is found in the mitochondrion. The enzyme catalyses 3-methyl-2-oxobutanoate + acetyl-CoA + H2O = (2S)-2-isopropylmalate + CoA + H(+). Its pathway is amino-acid biosynthesis; L-leucine biosynthesis; L-leucine from 3-methyl-2-oxobutanoate: step 1/4. In terms of biological role, catalyzes the condensation of the acetyl group of acetyl-CoA with 3-methyl-2-oxobutanoate (2-oxoisovalerate) to form 3-carboxy-3-hydroxy-4-methylpentanoate (2-isopropylmalate). Redundant to LEU4, responsible for about 20% of alpha-IPMS activity. Involved in leucine synthesis. The polypeptide is 2-isopropylmalate synthase 2, mitochondrial (Saccharomyces cerevisiae (strain ATCC 204508 / S288c) (Baker's yeast)).